Here is a 404-residue protein sequence, read N- to C-terminus: Arginine biosynthesis bifunctional protein ArgJ (404 aa).

Threonine 166, lysine 189, threonine 200, glutamate 280, asparagine 399, and serine 404 together coordinate substrate. Threonine 200 (nucleophile) is an active-site residue.

Belongs to the ArgJ family. As to quaternary structure, heterotetramer of two alpha and two beta chains.

It is found in the cytoplasm. The catalysed reaction is N(2)-acetyl-L-ornithine + L-glutamate = N-acetyl-L-glutamate + L-ornithine. The enzyme catalyses L-glutamate + acetyl-CoA = N-acetyl-L-glutamate + CoA + H(+). It participates in amino-acid biosynthesis; L-arginine biosynthesis; L-ornithine and N-acetyl-L-glutamate from L-glutamate and N(2)-acetyl-L-ornithine (cyclic): step 1/1. It functions in the pathway amino-acid biosynthesis; L-arginine biosynthesis; N(2)-acetyl-L-ornithine from L-glutamate: step 1/4. Catalyzes two activities which are involved in the cyclic version of arginine biosynthesis: the synthesis of N-acetylglutamate from glutamate and acetyl-CoA as the acetyl donor, and of ornithine by transacetylation between N(2)-acetylornithine and glutamate. The sequence is that of Arginine biosynthesis bifunctional protein ArgJ from Mycolicibacterium paratuberculosis (strain ATCC BAA-968 / K-10) (Mycobacterium paratuberculosis).